The chain runs to 394 residues: Elongation factor Tu (394 aa).

The tr-type G domain maps to 10-204; the sequence is KPHVNVGTIG…ALDSYIPTPE (195 aa). Positions 19–26 are G1; it reads GHVDHGKT. 19-26 contacts GTP; sequence GHVDHGKT. Thr-26 is a binding site for Mg(2+). The interval 60-64 is G2; it reads GITIN. The segment at 81–84 is G3; that stretch reads DCPG. GTP contacts are provided by residues 81-85 and 136-139; these read DCPGH and NKCD. The interval 136–139 is G4; sequence NKCD. Residues 174–176 form a G5 region; the sequence is SAL.

This sequence belongs to the TRAFAC class translation factor GTPase superfamily. Classic translation factor GTPase family. EF-Tu/EF-1A subfamily. In terms of assembly, monomer.

It localises to the cytoplasm. It catalyses the reaction GTP + H2O = GDP + phosphate + H(+). Its function is as follows. GTP hydrolase that promotes the GTP-dependent binding of aminoacyl-tRNA to the A-site of ribosomes during protein biosynthesis. The chain is Elongation factor Tu from Neisseria meningitidis serogroup A / serotype 4A (strain DSM 15465 / Z2491).